The primary structure comprises 856 residues: Glucans biosynthesis glucosyltransferase H (856 aa).

The next 6 helical transmembrane spans lie at isoleucine 144–methionine 164, isoleucine 198–methionine 218, valine 517–leucine 537, leucine 574–tryptophan 594, threonine 608–phenylalanine 628, and phenylalanine 684–isoleucine 704.

This sequence belongs to the glycosyltransferase 2 family. OpgH subfamily.

It is found in the cell inner membrane. It participates in glycan metabolism; osmoregulated periplasmic glucan (OPG) biosynthesis. Involved in the biosynthesis of osmoregulated periplasmic glucans (OPGs). This chain is Glucans biosynthesis glucosyltransferase H, found in Pseudomonas fluorescens (strain ATCC BAA-477 / NRRL B-23932 / Pf-5).